The following is a 703-amino-acid chain: MGVRSPLSASGPRGAAVLVLLLLGVALCSAVEEKKVCQGTNNKLTQLGHVEDHFTSLQRMYNNCEVVLSNLEITYVEHNRDLTFLKTIQEVAGYVLIALNMVDVIPLENLQIIRGNVLYDNSFALAVLSNYHMNKTQGLRELPMKRLSEILNGGVKISNNPKLCNMDTVLWNDIIDTSRKPLTVLDFASNLSSCPKCHPNCTEDHCWGAGEQNCQTLTKVICAQQCSGRCRGKVPSDCCHNQCAAGCTGPRESDCLACRKFRDDATCKDTCPPLVLYNPTTYQMDVNPEGKYSFGATCVRECPHNYVVTDHGSCVRSCNTDTYEVEENGVRKCKKCDGLCSKVCNGIGIGELKGILSINATNIDSFKNCTKINGDVSILPVAFLGDAFTKTLPLDPKKLDVFRTVKEISGFLLIQAWPDNATDLYAFENLEIIRGRTKQHGQYSLAVVNLKIQSLGLRSLKEISDGDIAIMKNKNLCYADTMNWRSLFATQSQKTKIIQNRNKNDCTADRHVCDPLCSDVGCWGPGPFHCFSCRFFSRQKECVKQCNILQGEPREFERDSKCLPCHSECLVQNSTAYNTTCSGPGPDHCMKCAHFIDGPHCVKACPAGVLGENDTLVWKYADANAVCQLCHPNCTRGCKGPGLEGCPNGSKTPSIAAGVVGGLLCLVVVGLGIGLYLRRRHIVRKRTLRRLLQERELVEPLTP.

Residues 1–30 (MGVRSPLSASGPRGAAVLVLLLLGVALCSA) form the signal peptide. Over 31-654 (VEEKKVCQGT…GCPNGSKTPS (624 aa)) the chain is Extracellular. Cys37 and Cys64 form a disulfide bridge. 3 N-linked (GlcNAc...) asparagine glycosylation sites follow: Asn134, Asn190, and Asn200. Disulfide bonds link Cys164–Cys194, Cys197–Cys206, Cys201–Cys214, Cys222–Cys230, Cys226–Cys238, Cys239–Cys247, Cys243–Cys255, Cys258–Cys267, Cys271–Cys298, Cys302–Cys314, Cys318–Cys333, Cys336–Cys340, and Cys344–Cys369. Residues Asn359, Asn368, and Asn420 are each glycosylated (N-linked (GlcNAc...) asparagine). 11 disulfide bridges follow: Cys477–Cys506, Cys513–Cys522, Cys517–Cys530, Cys533–Cys542, Cys546–Cys562, Cys565–Cys581, Cys569–Cys589, Cys592–Cys601, Cys605–Cys627, Cys630–Cys638, and Cys634–Cys646. N-linked (GlcNAc...) asparagine glycosylation is found at Asn573 and Asn578. Residues Asn613 and Asn633 are each glycosylated (N-linked (GlcNAc...) asparagine). Asn648 carries N-linked (GlcNAc...) asparagine glycosylation. A helical membrane pass occupies residues 655-667 (IAAGVVGGLLCLV). Over 668–703 (VVGLGIGLYLRRRHIVRKRTLRRLLQERELVEPLTP) the chain is Cytoplasmic. A phosphothreonine mark is found at Thr687 and Thr702.

Belongs to the protein kinase superfamily. Tyr protein kinase family. EGF receptor subfamily. Binding of the ligand triggers homo- and/or heterodimerization of the receptor triggering its autophosphorylation. Post-translationally, phosphorylated. Autophosphorylates.

The protein localises to the cell membrane. Its subcellular location is the endoplasmic reticulum membrane. It localises to the golgi apparatus membrane. It is found in the nucleus membrane. The protein resides in the endosome. The protein localises to the endosome membrane. Its subcellular location is the nucleus. It carries out the reaction L-tyrosyl-[protein] + ATP = O-phospho-L-tyrosyl-[protein] + ADP + H(+). With respect to regulation, endocytosis and inhibition of the activated EGFR by phosphatases constitute immediate regulatory mechanisms. Moreover, inducible feedback inhibitors may constitute alternative regulatory mechanisms for the EGFR signaling. Receptor tyrosine kinase binding ligands of the EGF family and activating several signaling cascades to convert extracellular cues into appropriate cellular responses. Known ligands include EGF and TGFA/TGF-alpha. Ligand binding triggers receptor homo- and/or heterodimerization and autophosphorylation on key cytoplasmic residues. The phosphorylated receptor recruits adapter proteins like GRB2 which in turn activates complex downstream signaling cascades. Activates at least 4 major downstream signaling cascades including the RAS-RAF-MEK-ERK, PI3 kinase-AKT, PLCgamma-PKC and STATs modules. May also activate the NF-kappa-B signaling cascade. The protein is Epidermal growth factor receptor (EGFR) of Gallus gallus (Chicken).